Here is a 58-residue protein sequence, read N- to C-terminus: Leucine zipper protein 6 (58 aa).

Widely expressed, highest levels found in brain, placenta, spleen, testis, and ovary. Up-regulated in some tumor cells.

This is Leucine zipper protein 6 (LUZP6) from Homo sapiens (Human).